We begin with the raw amino-acid sequence, 60 residues long: UPF0337 protein SAV1625 (60 aa).

The tract at residues V18 to K41 is disordered. Residues D23–K41 are compositionally biased toward basic and acidic residues.

This sequence belongs to the UPF0337 (CsbD) family.

The chain is UPF0337 protein SAV1625 from Staphylococcus aureus (strain Mu50 / ATCC 700699).